The sequence spans 501 residues: Ribose import ATP-binding protein RbsA (501 aa).

ABC transporter domains follow at residues Leu-5–Lys-241 and Ala-252–Leu-495. Residue Gly-37–Ser-44 participates in ATP binding.

Belongs to the ABC transporter superfamily. Ribose importer (TC 3.A.1.2.1) family. In terms of assembly, the complex is composed of an ATP-binding protein (RbsA), two transmembrane proteins (RbsC) and a solute-binding protein (RbsB).

Its subcellular location is the cell inner membrane. It carries out the reaction D-ribose(out) + ATP + H2O = D-ribose(in) + ADP + phosphate + H(+). Functionally, part of the ABC transporter complex RbsABC involved in ribose import. Responsible for energy coupling to the transport system. The chain is Ribose import ATP-binding protein RbsA from Salmonella typhi.